Reading from the N-terminus, the 392-residue chain is Putative nickel insertion protein (392 aa).

The protein belongs to the LarC family.

This chain is Putative nickel insertion protein, found in Methanothrix thermoacetophila (strain DSM 6194 / JCM 14653 / NBRC 101360 / PT) (Methanosaeta thermophila).